Consider the following 662-residue polypeptide: MASNQPNNGEQDEQLAKQTSKLSMSAKAPTFTPKAAPFIPSFQRPGFVPVNNIAGGYPYAQYTGQGQNSNSPHPTKSYQQYYQKPTGNTVDEDKSRVPDFSKKKSFVPPKPAIPKGKVLSLGGNTSAPKSTKPISISLGGTKAPTTTKPAAPAAQSKTETPAPKVTSESTKKETAAPPPQETPTKSADAELAKTPSAPAAALKKAAEAAEPATVTEDATDLQNEVDQELLKDMYGKEHVNIVFIGHVDAGKSTLGGNILFLTGMVDKRTMEKIEREAKEAGKESWYLSWALDSTSEEREKGKTVEVGRAYFETEHRRFSLLDAPGHKGYVTNMINGASQADIGVLVISARRGEFEAGFERGGQTREHAVLARTQGINHLVVVINKMDEPSVQWSEERYKECVDKLSMFLRRVAGYNSKTDVKYMPVSAYTGQNVKDRVDSSVCPWYQGPSLLEYLDSMTHLERKVNAPFIMPIASKYKDLGTILEGKIEAGSIKKNSNVLVMPINQTLEVTAIYDEADEEISSSICGDQVRLRVRGDDSDVQTGYVLTSTKNPVHATTRFIAQIAILELPSILTTGYSCVMHIHTAVEEVSFAKLLHKLDKTNRKSKKPPMFATKGMKIIAELETQTPVCMERFEDYQYMGRFTLRDQGTTVAVGKVVKILD.

The tract at residues 1-220 (MASNQPNNGE…PATVTEDATD (220 aa)) is disordered. The span at 26-40 (AKAPTFTPKAAPFIP) shows a compositional bias: low complexity. Positions 62 to 89 (YTGQGQNSNSPHPTKSYQQYYQKPTGNT) are enriched in polar residues. A compositionally biased stretch (basic and acidic residues) spans 91-102 (DEDKSRVPDFSK). The span at 122-134 (GGNTSAPKSTKPI) shows a compositional bias: polar residues. Positions 141 to 158 (TKAPTTTKPAAPAAQSKT) are enriched in low complexity. Phosphothreonine is present on T182. Over residues 192–213 (AKTPSAPAAALKKAAEAAEPAT) the composition is skewed to low complexity. The tr-type G domain occupies 236–464 (KEHVNIVFIG…LDSMTHLERK (229 aa)). The segment at 245-252 (GHVDAGKS) is G1. GTP is bound at residue 245-252 (GHVDAGKS). The segment at 301 to 305 (GKTVE) is G2. Residues 322-325 (DAPG) form a G3 region. GTP is bound by residues 384 to 387 (NKMD) and 428 to 429 (AY). Residues 384 to 387 (NKMD) form a G4 region. Residues 427–429 (SAY) form a G5 region. Position 539 is a phosphoserine (S539).

It belongs to the TRAFAC class translation factor GTPase superfamily. Classic translation factor GTPase family. ERF3 subfamily. In terms of assembly, component of the eRF1-eRF3-GTP ternary complex, composed of sup45/eRF1, sup35/eRF3 and GTP.

Its subcellular location is the cytoplasm. It carries out the reaction GTP + H2O = GDP + phosphate + H(+). In terms of biological role, GTPase component of the eRF1-eRF3-GTP ternary complex, a ternary complex that mediates translation termination in response to the termination codons. Sup35/eRF3 mediates sup45/ERF1 delivery to stop codons: The eRF1-eRF3-GTP complex binds to a stop codon in the ribosomal A-site. GTP hydrolysis by sup35/eRF3 induces a conformational change that leads to its dissociation, permitting sup45/eRF1 to accommodate fully in the A-site. This is Eukaryotic peptide chain release factor GTP-binding subunit (sup35) from Schizosaccharomyces pombe (strain 972 / ATCC 24843) (Fission yeast).